An 84-amino-acid chain; its full sequence is Exodeoxyribonuclease 7 small subunit (84 aa).

The protein belongs to the XseB family. Heterooligomer composed of large and small subunits.

Its subcellular location is the cytoplasm. The catalysed reaction is Exonucleolytic cleavage in either 5'- to 3'- or 3'- to 5'-direction to yield nucleoside 5'-phosphates.. In terms of biological role, bidirectionally degrades single-stranded DNA into large acid-insoluble oligonucleotides, which are then degraded further into small acid-soluble oligonucleotides. The protein is Exodeoxyribonuclease 7 small subunit of Bartonella henselae (strain ATCC 49882 / DSM 28221 / CCUG 30454 / Houston 1) (Rochalimaea henselae).